The following is a 139-amino-acid chain: uncharacterized protein (139 aa).

It to E.coli YebE.

This is an uncharacterized protein from Yersinia enterocolitica.